Consider the following 86-residue polypeptide: Large ribosomal subunit protein bL27 (86 aa).

The interval 1–24 (MATKKAGGSSRNGRDSAGRRLGVK) is disordered.

It belongs to the bacterial ribosomal protein bL27 family.

In Rickettsia felis (strain ATCC VR-1525 / URRWXCal2) (Rickettsia azadi), this protein is Large ribosomal subunit protein bL27.